The chain runs to 538 residues: CTP synthase (538 aa).

An amidoligase domain region spans residues 1-266 (MKTKFIFVTG…DDQVVDKLNI (266 aa)). Ser-14 contacts CTP. A UTP-binding site is contributed by Ser-14. ATP is bound by residues 15-20 (SIGKGL) and Asp-72. Residues Asp-72 and Glu-140 each coordinate Mg(2+). Residues 147–149 (DIE), 187–192 (KTKPTQ), and Lys-223 contribute to the CTP site. UTP is bound by residues 187–192 (KTKPTQ) and Lys-223. In terms of domain architecture, Glutamine amidotransferase type-1 spans 292–534 (HIAIVGKYVN…IAAALEHRGK (243 aa)). An L-glutamine-binding site is contributed by Gly-354. Cys-381 serves as the catalytic Nucleophile; for glutamine hydrolysis. Residues 382 to 385 (LGMQ), Glu-405, and Arg-462 each bind L-glutamine. Active-site residues include His-507 and Glu-509.

This sequence belongs to the CTP synthase family. Homotetramer.

The catalysed reaction is UTP + L-glutamine + ATP + H2O = CTP + L-glutamate + ADP + phosphate + 2 H(+). The enzyme catalyses L-glutamine + H2O = L-glutamate + NH4(+). It catalyses the reaction UTP + NH4(+) + ATP = CTP + ADP + phosphate + 2 H(+). It participates in pyrimidine metabolism; CTP biosynthesis via de novo pathway; CTP from UDP: step 2/2. With respect to regulation, allosterically activated by GTP, when glutamine is the substrate; GTP has no effect on the reaction when ammonia is the substrate. The allosteric effector GTP functions by stabilizing the protein conformation that binds the tetrahedral intermediate(s) formed during glutamine hydrolysis. Inhibited by the product CTP, via allosteric rather than competitive inhibition. In terms of biological role, catalyzes the ATP-dependent amination of UTP to CTP with either L-glutamine or ammonia as the source of nitrogen. Regulates intracellular CTP levels through interactions with the four ribonucleotide triphosphates. This is CTP synthase from Geobacter metallireducens (strain ATCC 53774 / DSM 7210 / GS-15).